Reading from the N-terminus, the 72-residue chain is DNA gyrase inhibitor YacG (72 aa).

4 residues coordinate Zn(2+): Cys17, Cys20, Cys32, and Cys36. A disordered region spans residues Ile51–Arg72.

The protein belongs to the DNA gyrase inhibitor YacG family. In terms of assembly, interacts with GyrB. The cofactor is Zn(2+).

Its function is as follows. Inhibits all the catalytic activities of DNA gyrase by preventing its interaction with DNA. Acts by binding directly to the C-terminal domain of GyrB, which probably disrupts DNA binding by the gyrase. The polypeptide is DNA gyrase inhibitor YacG (Methylorubrum extorquens (strain PA1) (Methylobacterium extorquens)).